The following is a 92-amino-acid chain: Small nuclear ribonucleoprotein E (92 aa).

In terms of domain architecture, Sm spans 18 to 92; that stretch reads INLIFRYLQN…NITLLQSVSN (75 aa).

This sequence belongs to the snRNP Sm proteins family. As to quaternary structure, core component of the spliceosomal U1, U2, U4 and U5 small nuclear ribonucleoproteins (snRNPs), the building blocks of the spliceosome. Most spliceosomal snRNPs contain a common set of Sm proteins, SNRPB, SNRPD1, SNRPD2, SNRPD3, SNRPE, SNRPF and SNRPG that assemble in a heptameric protein ring on the Sm site of the small nuclear RNA to form the core snRNP. Component of the U1 snRNP. The U1 snRNP is composed of the U1 snRNA and the 7 core Sm proteins SNRPB, SNRPD1, SNRPD2, SNRPD3, SNRPE, SNRPF and SNRPG, and at least three U1 snRNP-specific proteins SNRNP70/U1-70K, SNRPA/U1-A and SNRPC/U1-C. Component of the U4/U6-U5 tri-snRNP complex composed of the U4, U6 and U5 snRNAs and at least PRPF3, PRPF4, PRPF6, PRPF8, PRPF31, SNRNP200, TXNL4A, SNRNP40, SNRPB, SNRPD1, SNRPD2, SNRPD3, SNRPE, SNRPF, SNRPG, DDX23, CD2BP2, PPIH, SNU13, EFTUD2, SART1 and USP39, plus LSM2, LSM3, LSM4, LSM5, LSM6, LSM7 and LSM8. Component of the U7 snRNP complex, or U7 Sm protein core complex, that is composed of the U7 snRNA and at least LSM10, LSM11, SNRPB, SNRPD3, SNRPE, SNRPF and SNRPG; the complex does not contain SNRPD1 and SNRPD2. Component of the minor spliceosome, which splices U12-type introns. Part of the SMN-Sm complex that contains SMN1, GEMIN2/SIP1, DDX20/GEMIN3, GEMIN4, GEMIN5, GEMIN6, GEMIN7, GEMIN8, STRAP/UNRIP and the Sm proteins SNRPB, SNRPD1, SNRPD2, SNRPD3, SNRPE, SNRPF and SNRPG; catalyzes core snRNPs assembly. Forms a 6S pICln-Sm complex composed of CLNS1A/pICln, SNRPD1, SNRPD2, SNRPE, SNRPF and SNRPG; ring-like structure where CLNS1A/pICln mimics additional Sm proteins and which is unable to assemble into the core snRNP. Interacts with SMN1; the interaction is direct. Interacts with GEMIN2 (via N-terminus); the interaction is direct. Interacts with SNRPF; the interaction is direct. Interacts with SNRPG; the interaction is direct.

The protein resides in the cytoplasm. It localises to the cytosol. Its subcellular location is the nucleus. Functionally, plays a role in pre-mRNA splicing as a core component of the spliceosomal U1, U2, U4 and U5 small nuclear ribonucleoproteins (snRNPs), the building blocks of the spliceosome. Component of both the pre-catalytic spliceosome B complex and activated spliceosome C complexes. As a component of the minor spliceosome, involved in the splicing of U12-type introns in pre-mRNAs. As part of the U7 snRNP it is involved in histone 3'-end processing. This Sus scrofa (Pig) protein is Small nuclear ribonucleoprotein E (SNRPE).